The primary structure comprises 109 residues: Nucleoid-associated protein Psyc_0793 (109 aa).

This sequence belongs to the YbaB/EbfC family. Homodimer.

It is found in the cytoplasm. It localises to the nucleoid. In terms of biological role, binds to DNA and alters its conformation. May be involved in regulation of gene expression, nucleoid organization and DNA protection. The protein is Nucleoid-associated protein Psyc_0793 of Psychrobacter arcticus (strain DSM 17307 / VKM B-2377 / 273-4).